Reading from the N-terminus, the 172-residue chain is NAD(P)H-quinone oxidoreductase subunit J (172 aa).

This sequence belongs to the complex I 30 kDa subunit family. In terms of assembly, NDH-1 can be composed of about 15 different subunits; different subcomplexes with different compositions have been identified which probably have different functions.

It localises to the cellular thylakoid membrane. The catalysed reaction is a plastoquinone + NADH + (n+1) H(+)(in) = a plastoquinol + NAD(+) + n H(+)(out). It carries out the reaction a plastoquinone + NADPH + (n+1) H(+)(in) = a plastoquinol + NADP(+) + n H(+)(out). In terms of biological role, NDH-1 shuttles electrons from an unknown electron donor, via FMN and iron-sulfur (Fe-S) centers, to quinones in the respiratory and/or the photosynthetic chain. The immediate electron acceptor for the enzyme in this species is believed to be plastoquinone. Couples the redox reaction to proton translocation, and thus conserves the redox energy in a proton gradient. Cyanobacterial NDH-1 also plays a role in inorganic carbon-concentration. The polypeptide is NAD(P)H-quinone oxidoreductase subunit J (Synechococcus elongatus (strain ATCC 33912 / PCC 7942 / FACHB-805) (Anacystis nidulans R2)).